Here is a 365-residue protein sequence, read N- to C-terminus: Alanine racemase (365 aa).

K32 functions as the Proton acceptor; specific for D-alanine in the catalytic mechanism. The residue at position 32 (K32) is an N6-(pyridoxal phosphate)lysine. Residue R128 participates in substrate binding. Catalysis depends on Y257, which acts as the Proton acceptor; specific for L-alanine. M305 is a binding site for substrate.

The protein belongs to the alanine racemase family. Pyridoxal 5'-phosphate serves as cofactor.

The enzyme catalyses L-alanine = D-alanine. It functions in the pathway amino-acid biosynthesis; D-alanine biosynthesis; D-alanine from L-alanine: step 1/1. Catalyzes the interconversion of L-alanine and D-alanine. May also act on other amino acids. This Francisella tularensis subsp. tularensis (strain WY96-3418) protein is Alanine racemase (alr).